Consider the following 469-residue polypeptide: Citrate synthase, mitochondrial (469 aa).

The transit peptide at Met-1–Ser-30 directs the protein to the mitochondrion. Catalysis depends on residues His-304 and His-350. Arg-359 lines the oxaloacetate pocket. Asp-405 is a catalytic residue. Oxaloacetate is bound by residues Arg-431 and Arg-451.

Belongs to the citrate synthase family. Homodimer.

It is found in the mitochondrion matrix. It catalyses the reaction oxaloacetate + acetyl-CoA + H2O = citrate + CoA + H(+). The protein operates within carbohydrate metabolism; tricarboxylic acid cycle; isocitrate from oxaloacetate: step 1/2. Key enzyme of the Krebs tricarboxylic acid cycle which catalyzes the synthesis of citrate from acetyl coenzyme A and oxaloacetate. This Thunnus albacares (Yellowfin tuna) protein is Citrate synthase, mitochondrial (cs).